Reading from the N-terminus, the 132-residue chain is D-ribose pyranase (132 aa).

The Proton donor role is filled by H20. Residues D28, H99, and 121 to 123 (YSN) contribute to the substrate site.

The protein belongs to the RbsD / FucU family. RbsD subfamily. In terms of assembly, homodecamer.

Its subcellular location is the cytoplasm. It catalyses the reaction beta-D-ribopyranose = beta-D-ribofuranose. It participates in carbohydrate metabolism; D-ribose degradation; D-ribose 5-phosphate from beta-D-ribopyranose: step 1/2. Catalyzes the interconversion of beta-pyran and beta-furan forms of D-ribose. The chain is D-ribose pyranase from Streptococcus agalactiae serotype V (strain ATCC BAA-611 / 2603 V/R).